A 244-amino-acid polypeptide reads, in one-letter code: UDP-2,3-diacylglucosamine hydrolase (244 aa).

Mn(2+) is bound by residues Asp8, His10, Asp41, Asn79, and His114. Residue 79-80 (NR) participates in substrate binding. Positions 122, 160, 164, 167, and 195 each coordinate substrate. Residues His195 and His197 each contribute to the Mn(2+) site.

Belongs to the LpxH family. Mn(2+) serves as cofactor.

It is found in the cell inner membrane. It carries out the reaction UDP-2-N,3-O-bis[(3R)-3-hydroxytetradecanoyl]-alpha-D-glucosamine + H2O = 2-N,3-O-bis[(3R)-3-hydroxytetradecanoyl]-alpha-D-glucosaminyl 1-phosphate + UMP + 2 H(+). It functions in the pathway glycolipid biosynthesis; lipid IV(A) biosynthesis; lipid IV(A) from (3R)-3-hydroxytetradecanoyl-[acyl-carrier-protein] and UDP-N-acetyl-alpha-D-glucosamine: step 4/6. Its function is as follows. Hydrolyzes the pyrophosphate bond of UDP-2,3-diacylglucosamine to yield 2,3-diacylglucosamine 1-phosphate (lipid X) and UMP by catalyzing the attack of water at the alpha-P atom. Involved in the biosynthesis of lipid A, a phosphorylated glycolipid that anchors the lipopolysaccharide to the outer membrane of the cell. This is UDP-2,3-diacylglucosamine hydrolase from Hahella chejuensis (strain KCTC 2396).